The primary structure comprises 382 residues: Opsin-VA (382 aa).

The Extracellular portion of the chain corresponds to 1 to 35; that stretch reads MELFPVAVNGVSHAEDPFSGPLTFIAPWNYKVLAT. A helical transmembrane segment spans residues 36-56; sequence LMFVVTAASLSENFAVMLVTF. Topologically, residues 57 to 67 are cytoplasmic; it reads RFTQLRKPLNY. The chain crosses the membrane as a helical span at residues 68 to 88; sequence IIVNLSLADFLVSLTGGTISF. At 89-103 the chain is on the extracellular side; the sequence is LTNYHGYFFLGKWAC. Cysteines 103 and 180 form a disulfide. A helical membrane pass occupies residues 104-124; it reads VLEGFAVTYFGIVALWSLAVL. Residues 125–147 lie on the Cytoplasmic side of the membrane; sequence AFERFFVICRPLGNIRLRGKHAA. The helical transmembrane segment at 148–168 threads the bilayer; it reads LGLLFVWTFSFIWTIPPVLGW. Residues 169–193 lie on the Extracellular side of the membrane; sequence SSYTVSKIGTTCEPNWYSGNFHDHT. Residues 194–214 form a helical membrane-spanning segment; sequence FIIAFFITCFILPLGVIVVCY. The Cytoplasmic segment spans residues 215–244; it reads CKLIKKLRKVSNTHGRLGNARKPERQVTRM. Residues 245 to 265 traverse the membrane as a helical segment; sequence VVVMIVAFMVAWTPYAAFSIV. Topologically, residues 266-279 are extracellular; it reads VTAHPSIHLDPRLA. Residues 280–300 traverse the membrane as a helical segment; that stretch reads AAPAFFSKTAAVYNPVIYVFM. Lys-287 is modified (N6-(retinylidene)lysine). Residues 301–382 lie on the Cytoplasmic side of the membrane; that stretch reads NKQFRKCLVQ…PIPENKVCPM (82 aa). A compositionally biased stretch (polar residues) spans 330 to 346; that stretch reads RQGMTNESHTGEMSTIA. Residues 330 to 371 form a disordered region; it reads RQGMTNESHTGEMSTIASRIPKDGSIPEKTQEHPGERRSLAH. Residues 349–368 show a composition bias toward basic and acidic residues; the sequence is IPKDGSIPEKTQEHPGERRS.

This sequence belongs to the G-protein coupled receptor 1 family. Opsin subfamily. Expressed in a subset of retinal horizontal cells as well as in retinal ganglion cells.

The protein resides in the membrane. The protein is Opsin-VA of Rutilus rutilus (Roach).